The primary structure comprises 344 residues: Putative NAD(P)H nitroreductase MT3217 (344 aa).

Residues 40–44 and Arg326 contribute to the FMN site; that span reads QPWRW.

The protein belongs to the nitroreductase family. As to quaternary structure, interacts with human TLR2. FMN is required as a cofactor.

Stimulates pro-inflammatory cytokine expression via TLR2 signaling pathway. Activation of TLR2 results in the phosphorylation and activation of NF-kappa-B. Also induces TLR2 expression. May influence the innate immune responses to facilitate the survival of M.tuberculosis in the granulomatous microenvironment. This is Putative NAD(P)H nitroreductase MT3217 from Mycobacterium tuberculosis (strain CDC 1551 / Oshkosh).